The primary structure comprises 955 residues: Anoctamin-4 (955 aa).

Residues 1-352 (MEASSSGITN…FGEKIGLYFA (352 aa)) lie on the Extracellular side of the membrane. The interval 72-100 (CKDDDSLLHPGNLTSTSDDASRLEAGGET) is disordered. N-linked (GlcNAc...) asparagine glycans are attached at residues Asn-83, Asn-105, Asn-257, and Asn-288. The helical transmembrane segment at 353 to 373 (WLGWYTGMLFPAAFIGLFVFL) threads the bilayer. At 374-424 (YGVTTLDHSQVSKEVCQATDIIMCPVCDKYCPFMRLSDSCVYAKVTHLFDN) the chain is on the cytoplasmic side. A helical membrane pass occupies residues 425 to 445 (GATVFFAVFMAVWATVFLEFW). Over 446–505 (KRRRAVIAYDWDLIDWEEEEEEIRPQFEAKYSKKERMNPISGKPEPYQAFTDKCSRLIVS) the chain is Extracellular. The helical transmembrane segment at 506–526 (ASGIFFMICVVIAAVFGIVIY) threads the bilayer. Residues 527–547 (RVVTVSTFAAFKWALIRNNSQ) are Cytoplasmic-facing. A helical membrane pass occupies residues 548-568 (VATTGTAVCINFCIIMLLNVL). The Extracellular portion of the chain corresponds to 569–595 (YEKVALLLTNLEQPRTESEWENSFTLK). A helical membrane pass occupies residues 596–616 (MFLFQFVNLNSSTFYIAFFLG). Residues 617-715 (RFTGHPGAYL…AYGLFDEYLE (99 aa)) are Cytoplasmic-facing. A helical membrane pass occupies residues 716-736 (MILQFGFTTIFVAAFPLAPLL). The Extracellular segment spans residues 737–768 (ALLNNIIEIRLDAYKFVTQWRRPLASRAKDIG). A helical transmembrane segment spans residues 769 to 789 (IWYGILEGIGILSVITNAFVI). Over 790–885 (AITSDFIPRL…QFWHVLAARL (96 aa)) the chain is Cytoplasmic. Residues 886-906 (AFIIVFEHLVFCIKHLISYLI) form a helical membrane-spanning segment. Residues 907–955 (PDLPKDLRDRMRREKYLIQEMMYEAELERLQKERKERKKNGKAHHNEWP) lie on the Extracellular side of the membrane.

Belongs to the anoctamin family.

The protein localises to the cell membrane. It catalyses the reaction a 1,2-diacyl-sn-glycero-3-phospho-L-serine(in) = a 1,2-diacyl-sn-glycero-3-phospho-L-serine(out). It carries out the reaction a beta-D-galactosyl-(1&lt;-&gt;1')-N-acylsphing-4-enine(out) = a beta-D-galactosyl-(1&lt;-&gt;1')-N-acylsphing-4-enine(in). The catalysed reaction is a 1,2-diacyl-sn-glycero-3-phosphocholine(in) = a 1,2-diacyl-sn-glycero-3-phosphocholine(out). Functionally, has calcium-dependent phospholipid scramblase activity; scrambles phosphatidylserine, phosphatidylcholine and galactosylceramide. Does not exhibit calcium-activated chloride channel (CaCC) activity. This is Anoctamin-4 (ANO4) from Homo sapiens (Human).